The primary structure comprises 787 residues: MLEDTSFAIQPEQDDKTQETHRIDIGNMHTFSHTEHVFSFHCDTGIVKIRFYREDIVRIAFNPFGETSLSTSVAVVKEPEKVDASVHETEEEVTLTSAKQTVVLQKRPFRVRIYDNHGRLLVAEGKKGMAFTYQGEVCCFKMMDEADHFYGFGEKTGFLDKRGETMTMWNTDVYAPHNPETDPLYQSHPYFMTVRNGSAHGIFFDNTYKTTFDFQTATDEYCFSAEGGAIDYYVFAGPTPKDVLEQYTDLTGRMPLPPKWALGYHQSRYSYETEQEVREIAQTFIEKDIPLDVIYLDIHYMNGYRVFTFDRNRFPNLKQLIADLKQKGIRVVPIVDPGVKEDPEYVIYQEGIRHDYFCKYIEGNVYFGEVWPGKSAFPDFTNKKVRKWWGEKHQFYTDLGIEGIWNDMNEPSVFNETKTMDVKVIHDNDGDPKTHRELHNVYGFMMGEATYKGMKKLLNGKRPFLLTRAGFSGIQRYAAVWTGDNRSFWEHLQMSLPMCMNLGLSGVAFCGPDVGGFAHNTNGELLTRWMQVGAFTPYFRNHCAIGFRRQEPWAFGEKYERIIKKYIRLRYQWLPHLYTLFAEAHETGAPVMRPLFFEYPDDENTYNLYDEFLVGANVLIAPIMTPSTTRRVAYFPKGNWVDYWTGEVLEGGQYHLISADLETLPIFIKQGSAIALGDVKRSTEMPDEHRTVHIYKANGGKATYVLYDDDGQTFSYEKGDYLRMYIEVEYGENSVHIVTKSEGTYQPSWKLSFAIHHATEQTKVTIDGNEQNAIFDPHQRILLIQSE.

Catalysis depends on residues Asp-407 and Glu-410. The Proton donor role is filled by Asp-484.

Belongs to the glycosyl hydrolase 31 family. As to quaternary structure, homohexamer.

It carries out the reaction Hydrolysis of terminal, non-reducing (1-&gt;4)-linked alpha-D-glucose residues with release of alpha-D-glucose.. This Bacillus thermoamyloliquefaciens protein is Alpha-glucosidase 2.